A 78-amino-acid polypeptide reads, in one-letter code: Probable [Fe-S]-dependent transcriptional repressor (78 aa).

4 residues coordinate iron-sulfur cluster: Cys-56, Cys-61, Cys-64, and Cys-70.

The protein belongs to the FeoC family.

In terms of biological role, may function as a transcriptional regulator that controls feoABC expression. The sequence is that of Probable [Fe-S]-dependent transcriptional repressor from Cronobacter sakazakii (strain ATCC BAA-894) (Enterobacter sakazakii).